The sequence spans 372 residues: Putative glutamate--cysteine ligase 2 (372 aa).

This sequence belongs to the glutamate--cysteine ligase type 2 family. YbdK subfamily. In terms of assembly, homodimer.

The enzyme catalyses L-cysteine + L-glutamate + ATP = gamma-L-glutamyl-L-cysteine + ADP + phosphate + H(+). Its function is as follows. ATP-dependent carboxylate-amine ligase which exhibits weak glutamate--cysteine ligase activity. The sequence is that of Putative glutamate--cysteine ligase 2 (ybdK) from Escherichia coli O17:K52:H18 (strain UMN026 / ExPEC).